The following is a 441-amino-acid chain: 3-oxo-glucose-6-phosphate:glutamate aminotransferase (441 aa).

Thr98–Ser99 is a substrate binding site. Pyridoxal 5'-phosphate is bound at residue Gly125–Thr126. Phe151 lines the substrate pocket. 2 residues coordinate pyridoxal 5'-phosphate: Gln225 and Ser242. Asn244–Tyr246 is a binding site for substrate. N6-(pyridoxal phosphate)lysine is present on Lys247. Residues Tyr274 and Lys282 each coordinate substrate. Asn292 serves as a coordination point for pyridoxal 5'-phosphate. Tyr379 is a substrate binding site.

This sequence belongs to the DegT/DnrJ/EryC1 family. Homodimer. It depends on pyridoxal 5'-phosphate as a cofactor.

It catalyses the reaction 3-dehydro-D-glucose 6-phosphate + L-glutamate = D-kanosamine 6-phosphate + 2-oxoglutarate. It participates in antibiotic biosynthesis; kanosamine biosynthesis. Its function is as follows. Involved in the biosynthesis of kanosamine (3-amino-3-deoxy-D-glucose), which is known to have antibiotic and antifungal properties, and to be a precursor of the antibiotic neotrehalosadiamine (3,3'-diamino-3,3'-dideoxy-alpha,beta-trehalose (NTD)). Catalyzes the reversible pyridoxal phosphate-dependent transamination of 3-dehydro-alpha-D-glucose 6-phosphate to form alpha-D-kanosamine-6-phosphate. It can only use alpha-anomer and glutamate is the only amino donor. In Bacillus subtilis (strain 168), this protein is 3-oxo-glucose-6-phosphate:glutamate aminotransferase (ntdA).